Here is a 979-residue protein sequence, read N- to C-terminus: Receptor-type tyrosine-protein phosphatase-like N (979 aa).

A signal peptide spans 1 to 37; it reads MRRPRRPGGSGGSGGSGGLRLLVCLLLLSGRPGGCSA. The interval 38–134 is RESP18 homology domain; that stretch reads ISAHGCLFDR…HPRDRSGLVP (97 aa). Topologically, residues 38-575 are lumenal; the sequence is ISAHGCLFDR…RQAHGISPMR (538 aa). Cysteines 56 and 65 form a disulfide. Basic and acidic residues predominate over residues 113 to 130; the sequence is MERIPRLRPPEPHPRDRS. Disordered stretches follow at residues 113 to 173, 289 to 330, and 392 to 443; these read MERI…GSPL, GRAR…AAQP, and MQRG…SSSV. The span at 145-155 shows a compositional bias: polar residues; that stretch reads TQGNPTGSSPA. The span at 303–322 shows a compositional bias: basic and acidic residues; that stretch reads RAEDSSEGHEEEVLGGRGEK. A phosphoserine mark is found at Ser307 and Ser308. The span at 414–424 shows a compositional bias: polar residues; sequence SPASSEVQQVL. Residues 449–575 form a sufficient for dimerization of proICA512 region; it reads SPLGQSQPTV…RQAHGISPMR (127 aa). 2 N-linked (GlcNAc...) asparagine glycosylation sites follow: Asn506 and Asn524. Residues 576 to 600 traverse the membrane as a helical segment; it reads SVLLTLVALAGVAGLLVALAVALCM. Residues 601 to 732 form a sufficient for dimerization of proICA512 region; that stretch reads RHHSRQRDKE…PNTCAAAQDE (132 aa). Over 601–979 the chain is Cytoplasmic; sequence RHHSRQRDKE…VNAILKALPQ (379 aa). The disordered stretch occupies residues 644–680; the sequence is RAEGQPEPSRVSSVSSQFSDAAQASPSSHSSTPSWCE. Low complexity predominate over residues 648 to 677; that stretch reads QPEPSRVSSVSSQFSDAAQASPSSHSSTPS. Residues 709 to 969 form the Tyrosine-protein phosphatase domain; it reads LAKEWQALCA…EFALTAVAEE (261 aa). Lys754 is covalently cross-linked (Glycyl lysine isopeptide (Lys-Gly) (interchain with G-Cter in SUMO)).

Belongs to the protein-tyrosine phosphatase family. Receptor class 8 subfamily. As to quaternary structure, homodimer; shown for the unprocessed protein (proICA512) in the endoplasmic reticulum and resolved during protein maturation as ICA512-TMF seems to be predominantly monomeric in secretory granules; however, ICA512-CCF interacts with ICA512-TMF disrupting the ICA512-TMF:SNTB2 complex. The isolated lumenal RESP18 homology domain has been shown to form disulfide-linked homooligomers. Interacts (via cytoplasmic domain) with phosphorylated SNTB2; this protects PTPRN against cleavage by CAPN1 to produce ICA512-CCF. Dephosphorylation of SNTB2 upon insulin stimulation disrupts the interaction and results in PTPRN cleavage. Interacts with SNX19. ICA512-CCF interacts with PIAS4; in the nucleus. Interacts with STAT5B (phosphorylated); down-regulated by ICA512-CCF sumoylation; ICA512-CCF prevents STAT5B dephosphorylation; ICA512-CCF mediates interaction of STAT5B with PIAS4. Interacts (via RESP18 homology domain) with insulin and proinsulin. Interacts with PTPRN2, PTPRA and PTPRE. Post-translationally, subject to proteolytic cleavage at multiple sites. Subject to cleavage on a pair of basic residues. On exocytosis of secretory granules in pancreatic beta-cells ICA512-TMF is transiently inserted in the plasma-membrane and cleaved by mu-type calpain CPN1 to yield ICA512-CCF. In terms of processing, O-glycosylated. N-glycosylated. Post-translationally, sumoylated at two sites including Lys-754. Sumoylation decreases interaction with STAT5. Detected in pituitary. Detected in brain (at protein level). Detected in brain. Weakly expressed in the colon, intestine, stomach and pancreas.

The protein localises to the membrane. Its subcellular location is the cytoplasmic vesicle. The protein resides in the secretory vesicle membrane. It is found in the perikaryon. It localises to the cell projection. The protein localises to the axon. Its subcellular location is the synapse. The protein resides in the cell membrane. It is found in the endosome. It localises to the nucleus. In terms of biological role, plays a role in vesicle-mediated secretory processes. Required for normal accumulation of secretory vesicles in hippocampus, pituitary and pancreatic islets. Required for the accumulation of normal levels of insulin-containing vesicles and preventing their degradation. Plays a role in insulin secretion in response to glucose stimuli. Required for normal accumulation of the neurotransmitters norepinephrine, dopamine and serotonin in the brain. In females, but not in males, required for normal accumulation and secretion of pituitary hormones, such as luteinizing hormone (LH) and follicle-stimulating hormone (FSH). Seems to lack intrinsic enzyme activity. Required to maintain normal levels of renin expression and renin release. May regulate catalytic active protein-tyrosine phosphatases such as PTPRA through dimerization. Its function is as follows. ICA512-TMF regulates dynamics and exocytosis of insulin secretory granules (SGs); binding of ICA512-TMF to SNTB2/beta-2-syntrophin is proposed to restrain SGs mobility and exocytosis by tethering them to the actin cytoskeleton depending on UTRN; the function is inhibited by cytoplasmic ICA512-CFF dimerizing with ICA512-TMF and displacing SNTB2. ICA512-CCF translocated to the nucleus promotes expression of insulin and other granule-related genes; the function implicates binding to and regulating activity of STAT5B probably by preventing its dephosphorylation and potentially by inducing its sumoylation by recruiting PIAS4. Enhances pancreatic beta-cell proliferation by converging with signaling by STAT5B and STAT3. ICA512-CCF located in the cytoplasm regulates dynamics and exocytosis of insulin secretory granules (SGs) by dimerizing with ICA512-TMF and displacing SNTB2 thus enhancing SGs mobility and exocytosis. The sequence is that of Receptor-type tyrosine-protein phosphatase-like N (Ptprn) from Mus musculus (Mouse).